A 136-amino-acid polypeptide reads, in one-letter code: Large ribosomal subunit protein uL22 (136 aa).

This sequence belongs to the universal ribosomal protein uL22 family. Part of the 50S ribosomal subunit.

In terms of biological role, this protein binds specifically to 23S rRNA; its binding is stimulated by other ribosomal proteins, e.g. L4, L17, and L20. It is important during the early stages of 50S assembly. It makes multiple contacts with different domains of the 23S rRNA in the assembled 50S subunit and ribosome. Its function is as follows. The globular domain of the protein is located near the polypeptide exit tunnel on the outside of the subunit, while an extended beta-hairpin is found that lines the wall of the exit tunnel in the center of the 70S ribosome. The polypeptide is Large ribosomal subunit protein uL22 (Parabacteroides distasonis (strain ATCC 8503 / DSM 20701 / CIP 104284 / JCM 5825 / NCTC 11152)).